The primary structure comprises 299 residues: Tyrosine recombinase XerC (299 aa).

Residues 1–86 form the Core-binding (CB) domain; the sequence is MRNELLDFLE…AIRSLFKFLT (86 aa). A Tyr recombinase domain is found at 107-293; sequence KLPEFLSIEE…NQARMTEVYN (187 aa). Catalysis depends on residues R146, K170, H245, R248, and H271. Y280 (O-(3'-phospho-DNA)-tyrosine intermediate) is an active-site residue.

The protein belongs to the 'phage' integrase family. XerC subfamily. In terms of assembly, forms a cyclic heterotetrameric complex composed of two molecules of XerC and two molecules of XerD.

The protein resides in the cytoplasm. Site-specific tyrosine recombinase, which acts by catalyzing the cutting and rejoining of the recombining DNA molecules. The XerC-XerD complex is essential to convert dimers of the bacterial chromosome into monomers to permit their segregation at cell division. It also contributes to the segregational stability of plasmids. The protein is Tyrosine recombinase XerC of Natranaerobius thermophilus (strain ATCC BAA-1301 / DSM 18059 / JW/NM-WN-LF).